Reading from the N-terminus, the 154-residue chain is Urease subunit alpha (154 aa).

Residues 38 to 154 enclose the Urease domain; it reads GGIDTHIHFI…ADEMDIQVAI (117 aa). Histidine 43, histidine 45, and lysine 126 together coordinate Ni(2+). An N6-carboxylysine modification is found at lysine 126. Substrate is bound at residue histidine 128.

This sequence belongs to the metallo-dependent hydrolases superfamily. Urease alpha subunit family. Heterotrimer of UreA (gamma), UreB (beta) and UreC (alpha) subunits. Three heterotrimers associate to form the active enzyme. Ni cation serves as cofactor. Post-translationally, carboxylation allows a single lysine to coordinate two nickel ions.

It is found in the cytoplasm. It catalyses the reaction urea + 2 H2O + H(+) = hydrogencarbonate + 2 NH4(+). It participates in nitrogen metabolism; urea degradation; CO(2) and NH(3) from urea (urease route): step 1/1. This is Urease subunit alpha (ureC) from Photobacterium damselae subsp. damselae (Listonella damsela).